A 294-amino-acid polypeptide reads, in one-letter code: HTH-type transcriptional regulator DgdR (294 aa).

The HTH lysR-type domain maps to 14 to 70 (LEIDLLRSFVVIAEVRALSRAAARVGRTQSALSQQMKRLEDIVDQPLFQRTGRGVVL). Residues 31 to 50 (LSRAAARVGRTQSALSQQMK) constitute a DNA-binding region (H-T-H motif).

The protein belongs to the LysR transcriptional regulatory family.

The protein is HTH-type transcriptional regulator DgdR (dgdR) of Burkholderia cepacia (Pseudomonas cepacia).